A 367-amino-acid chain; its full sequence is Queuine tRNA-ribosyltransferase (367 aa).

The active-site Proton acceptor is the aspartate 92. Substrate contacts are provided by residues 92-96 (DSGGF), aspartate 146, glutamine 188, and glycine 215. An RNA binding region spans residues 246–252 (GVGTPKD). Catalysis depends on aspartate 265, which acts as the Nucleophile. Positions 303, 305, 308, and 334 each coordinate Zn(2+).

It belongs to the queuine tRNA-ribosyltransferase family. As to quaternary structure, homodimer. Within each dimer, one monomer is responsible for RNA recognition and catalysis, while the other monomer binds to the replacement base PreQ1. It depends on Zn(2+) as a cofactor.

The enzyme catalyses 7-aminomethyl-7-carbaguanine + guanosine(34) in tRNA = 7-aminomethyl-7-carbaguanosine(34) in tRNA + guanine. It participates in tRNA modification; tRNA-queuosine biosynthesis. Functionally, catalyzes the base-exchange of a guanine (G) residue with the queuine precursor 7-aminomethyl-7-deazaguanine (PreQ1) at position 34 (anticodon wobble position) in tRNAs with GU(N) anticodons (tRNA-Asp, -Asn, -His and -Tyr). Catalysis occurs through a double-displacement mechanism. The nucleophile active site attacks the C1' of nucleotide 34 to detach the guanine base from the RNA, forming a covalent enzyme-RNA intermediate. The proton acceptor active site deprotonates the incoming PreQ1, allowing a nucleophilic attack on the C1' of the ribose to form the product. After dissociation, two additional enzymatic reactions on the tRNA convert PreQ1 to queuine (Q), resulting in the hypermodified nucleoside queuosine (7-(((4,5-cis-dihydroxy-2-cyclopenten-1-yl)amino)methyl)-7-deazaguanosine). This chain is Queuine tRNA-ribosyltransferase, found in Francisella tularensis subsp. tularensis (strain FSC 198).